We begin with the raw amino-acid sequence, 449 residues long: Trigger factor (449 aa).

The PPIase FKBP-type domain maps to 172 to 257 (GDRVTVDFVG…LKQVEWAHLP (86 aa)).

It belongs to the FKBP-type PPIase family. Tig subfamily.

The protein resides in the cytoplasm. The catalysed reaction is [protein]-peptidylproline (omega=180) = [protein]-peptidylproline (omega=0). Its function is as follows. Involved in protein export. Acts as a chaperone by maintaining the newly synthesized protein in an open conformation. Functions as a peptidyl-prolyl cis-trans isomerase. This is Trigger factor from Ralstonia nicotianae (strain ATCC BAA-1114 / GMI1000) (Ralstonia solanacearum).